The sequence spans 292 residues: Glycinyltransferase (292 aa).

Belongs to the thymidine aminotransferase family.

It carries out the reaction 5-phosphomethyl-dUMP in DNA + glycine = 5-N(alpha)-glycyl-dTMP in DNA + phosphate. Transfers glycine to 5-phosphomethyl-2'-deoxyuridine (5-PmdU) to produce 5-Nalpha-glycinylthymidine (Nalpha-GlyT) on DNA as a step in the pathway leading to thymidine hypermodifications in the viral genome. As a final result of the pathway of hypermodification, 5-acetylaminomethyl-2'-deoxyuridine (5-AcNmdU) substitutes for a subset of thymidines in the viral DNA. These modifications probably prevent degradation of viral genome by the host restriction-modification antiviral defense system. In Pseudomonas phage PaMx11, this protein is Glycinyltransferase.